The sequence spans 482 residues: Zinc finger protein 223 (482 aa).

The region spanning 8-78 is the KRAB domain; it reads VTFKDVAVVF…DIATQREGNS (71 aa). 5 consecutive C2H2-type zinc fingers follow at residues 176–198, 204–226, 232–254, 260–282, and 288–310; these read HSCDECGKSFCYISALHIHQRVH, FKCDVCGKEFSQSLHLQTHQRVH, FKCEQCGRGFRCRSALTVHCKLH, YNCEACGRAFIHDFQLQKHQRIH, and FKCEICSVSFRLRSSLNRHCVVH. A C2H2-type 6; degenerate zinc finger spans residues 316–338; the sequence is NSTGEYGKGFIRRLDLCKHQTIH. C2H2-type zinc fingers lie at residues 344–366, 372–394, and 400–422; these read YNCKECGKSFRRSSYLLIHQRVH, YKCDKCGKSYITKSGLDLHHRAH, and YNCDDCGKSFRQASSILNHKRLH. Residues 428–450 form a C2H2-type 10; degenerate zinc finger; sequence FKCEDCGKKLVYRSYRKDQQKNH.

It belongs to the krueppel C2H2-type zinc-finger protein family.

The protein localises to the nucleus. May be involved in transcriptional regulation. This is Zinc finger protein 223 (ZNF223) from Homo sapiens (Human).